Reading from the N-terminus, the 70-residue chain is Small ribosomal subunit protein bS21B (70 aa).

This sequence belongs to the bacterial ribosomal protein bS21 family.

The chain is Small ribosomal subunit protein bS21B from Rhizobium etli (strain ATCC 51251 / DSM 11541 / JCM 21823 / NBRC 15573 / CFN 42).